The chain runs to 184 residues: Large ribosomal subunit protein bL9 (184 aa).

Residues 160–184 (LQNQKSEQQEAEQDANKEATDGDDS) form a disordered region. Basic and acidic residues predominate over residues 173 to 184 (DANKEATDGDDS).

The protein belongs to the bacterial ribosomal protein bL9 family.

Binds to the 23S rRNA. This is Large ribosomal subunit protein bL9 from Wolbachia pipientis wMel.